Reading from the N-terminus, the 381-residue chain is Succinyl-diaminopimelate desuccinylase (381 aa).

Residue His71 coordinates Zn(2+). Asp73 is an active-site residue. Asp104 contributes to the Zn(2+) binding site. The active-site Proton acceptor is Glu138. 3 residues coordinate Zn(2+): Glu139, Glu167, and His353.

It belongs to the peptidase M20A family. DapE subfamily. In terms of assembly, homodimer. It depends on Zn(2+) as a cofactor. The cofactor is Co(2+).

The enzyme catalyses N-succinyl-(2S,6S)-2,6-diaminopimelate + H2O = (2S,6S)-2,6-diaminopimelate + succinate. It participates in amino-acid biosynthesis; L-lysine biosynthesis via DAP pathway; LL-2,6-diaminopimelate from (S)-tetrahydrodipicolinate (succinylase route): step 3/3. Functionally, catalyzes the hydrolysis of N-succinyl-L,L-diaminopimelic acid (SDAP), forming succinate and LL-2,6-diaminopimelate (DAP), an intermediate involved in the bacterial biosynthesis of lysine and meso-diaminopimelic acid, an essential component of bacterial cell walls. In Shewanella piezotolerans (strain WP3 / JCM 13877), this protein is Succinyl-diaminopimelate desuccinylase.